The sequence spans 250 residues: Galectin-3 (250 aa).

A disordered region spans residues 1-60 (MADNFSLHDALSGSGNPNPQGWPGAWGNQPAGAGGYPGASYPGAYPGQAPPGAYPGQAPP). A2 is modified (N-acetylalanine). S6 and S12 each carry phosphoserine. 3 tandem repeats follow at residues 36–44 (YPGASYPGA), 45–53 (YPGQAPPGA), and 54–62 (YPGQAPPGA). Residues 36 to 109 (YPGASYPGAY…AYPATGPYGA (74 aa)) form an 8 X 9 AA tandem repeats of Y-P-G-X(3)-P-G-A region. The segment covering 38–47 (GASYPGAYPG) has biased composition (low complexity). The span at 48–60 (QAPPGAYPGQAPP) shows a compositional bias: pro residues. A 4; approximate repeat occupies 63–69 (YPGAPGA). The stretch at 70 to 78 (YPGAPAPGV) is repeat 5. Residues 79–88 (YPGPPSGPGA) form a 6; approximate repeat. One copy of the 7; approximate repeat lies at 89 to 100 (YPSSGQPSATGA). The 8; approximate repeat unit spans residues 101–109 (YPATGPYGA). Positions 118-248 (YNLPLPGGVV…DIDLTSASYT (131 aa)) constitute a Galectin domain. Position 181–187 (181–187 (WGREERQ)) interacts with a beta-D-galactoside. S188 carries the post-translational modification Phosphoserine. Residues 226 to 241 (KKLNEISKLGISGDID) carry the Nuclear export signal motif.

As to quaternary structure, probably forms homo- or heterodimers. Interacts with DMBT1. Interacts with CD6 and ALCAM. Forms a complex with the ITGA3, ITGB1 and CSPG4. Interacts with LGALS3BP, LYPD3, ZFTRAF1 and UACA. Interacts with TRIM16; this interaction mediates autophagy of damage endomembranes. Interacts with cargo receptor TMED10; the interaction mediates the translocation from the cytoplasm into the ERGIC (endoplasmic reticulum-Golgi intermediate compartment) and thereby secretion. A major expression is found in the colonic epithelium. It is also abundant in the activated macrophages. Expressed in fetal membranes.

The protein localises to the cytoplasm. It localises to the nucleus. Its subcellular location is the secreted. Its function is as follows. Galactose-specific lectin which binds IgE. May mediate with the alpha-3, beta-1 integrin the stimulation by CSPG4 of endothelial cells migration. Together with DMBT1, required for terminal differentiation of columnar epithelial cells during early embryogenesis. In the nucleus: acts as a pre-mRNA splicing factor. Involved in acute inflammatory responses including neutrophil activation and adhesion, chemoattraction of monocytes macrophages, opsonization of apoptotic neutrophils, and activation of mast cells. Together with TRIM16, coordinates the recognition of membrane damage with mobilization of the core autophagy regulators ATG16L1 and BECN1 in response to damaged endomembranes. This Homo sapiens (Human) protein is Galectin-3.